Consider the following 449-residue polypeptide: Tubulin alpha-1C chain (449 aa).

Positions 1–4 match the MREC motif motif; the sequence is MREC. A GTP-binding site is contributed by Q11. N6-acetyllysine is present on K40. GTP is bound by residues E71, S140, G144, T145, T179, N206, and N228. Residue E71 participates in Mg(2+) binding. Residue E254 is part of the active site. 3'-nitrotyrosine is present on Y282. The interval 429 to 449 is disordered; sequence EKDYEEVGADSADGEDEGEEY. A compositionally biased stretch (acidic residues) spans 431–449; that stretch reads DYEEVGADSADGEDEGEEY. A Phosphotyrosine modification is found at Y432. Position 439 is a phosphoserine (S439). At Y449 the chain carries 3'-nitrotyrosine.

This sequence belongs to the tubulin family. Dimer of alpha and beta chains. A typical microtubule is a hollow water-filled tube with an outer diameter of 25 nm and an inner diameter of 15 nM. Alpha-beta heterodimers associate head-to-tail to form protofilaments running lengthwise along the microtubule wall with the beta-tubulin subunit facing the microtubule plus end conferring a structural polarity. Microtubules usually have 13 protofilaments but different protofilament numbers can be found in some organisms and specialized cells. Mg(2+) is required as a cofactor. Some glutamate residues at the C-terminus are polyglutamylated, resulting in polyglutamate chains on the gamma-carboxyl group. Polyglutamylation plays a key role in microtubule severing by spastin (SPAST). SPAST preferentially recognizes and acts on microtubules decorated with short polyglutamate tails: severing activity by SPAST increases as the number of glutamates per tubulin rises from one to eight, but decreases beyond this glutamylation threshold. Glutamylation is also involved in cilia motility. Post-translationally, some glutamate residues at the C-terminus are monoglycylated but not polyglycylated due to the absence of functional TTLL10 in human. Monoglycylation is mainly limited to tubulin incorporated into cilia and flagella axonemes, which is required for their stability and maintenance. Flagella glycylation controls sperm motility. Both polyglutamylation and monoglycylation can coexist on the same protein on adjacent residues, and lowering glycylation levels increases polyglutamylation, and reciprocally. In terms of processing, acetylation of alpha chains at Lys-40 is located inside the microtubule lumen. This modification has been correlated with increased microtubule stability, intracellular transport and ciliary assembly. Methylation of alpha chains at Lys-40 is found in mitotic microtubules and is required for normal mitosis and cytokinesis contributing to genomic stability. Post-translationally, nitration of Tyr-449 is irreversible and interferes with normal dynein intracellular distribution. In terms of processing, undergoes a tyrosination/detyrosination cycle, the cyclic removal and re-addition of a C-terminal tyrosine residue by the enzymes tubulin tyrosine carboxypeptidase (MATCAP1/KIAA0895L, VASH1 or VASH2) and tubulin tyrosine ligase (TTL), respectively. Tyrosination promotes microtubule interaction with CAP-Gly domain-containing proteins such as CLIP1, CLIP2 and DCTN1. Tyrosination regulates the initiation of dynein-dynactin motility via interaction with DCTN1, which brings the dynein-dynactin complex into contact with microtubules. In neurons, tyrosinated tubulins mediate the initiation of retrograde vesicle transport. Post-translationally, detyrosination is involved in metaphase plate congression by guiding chromosomes during mitosis: detyrosination promotes interaction with CENPE, promoting pole-proximal transport of chromosomes toward the equator. Detyrosination increases microtubules-dependent mechanotransduction in dystrophic cardiac and skeletal muscle. In cardiomyocytes, detyrosinated microtubules are required to resist to contractile compression during contraction: detyrosination promotes association with desmin (DES) at force-generating sarcomeres, leading to buckled microtubules and mechanical resistance to contraction.

It is found in the cytoplasm. It localises to the cytoskeleton. The enzyme catalyses GTP + H2O = GDP + phosphate + H(+). Functionally, tubulin is the major constituent of microtubules, a cylinder consisting of laterally associated linear protofilaments composed of alpha- and beta-tubulin heterodimers. Microtubules grow by the addition of GTP-tubulin dimers to the microtubule end, where a stabilizing cap forms. Below the cap, tubulin dimers are in GDP-bound state, owing to GTPase activity of alpha-tubulin. The chain is Tubulin alpha-1C chain (TUBA1C) from Homo sapiens (Human).